Consider the following 658-residue polypeptide: Glycogen debranching enzyme (658 aa).

Aspartate 336 functions as the Nucleophile in the catalytic mechanism. The active-site Proton donor is the glutamate 371. Residues 459–484 (EANGEENRDGTNSNYSDNHGKEGLGG) are disordered.

It belongs to the glycosyl hydrolase 13 family.

It carries out the reaction Hydrolysis of (1-&gt;6)-alpha-D-glucosidic linkages to branches with degrees of polymerization of three or four glucose residues in limit dextrin.. Its pathway is glycan degradation; glycogen degradation. Functionally, removes maltotriose and maltotetraose chains that are attached by 1,6-alpha-linkage to the limit dextrin main chain, generating a debranched limit dextrin. The protein is Glycogen debranching enzyme of Salmonella choleraesuis (strain SC-B67).